A 556-amino-acid chain; its full sequence is Protein F37C4.5 (556 aa).

A2 is subject to N-acetylalanine.

This Caenorhabditis elegans protein is Protein F37C4.5.